The following is a 238-amino-acid chain: Ribonuclease PH (238 aa).

Residues Arg86 and 124–126 (GTR) contribute to the phosphate site.

This sequence belongs to the RNase PH family. As to quaternary structure, homohexameric ring arranged as a trimer of dimers.

The enzyme catalyses tRNA(n+1) + phosphate = tRNA(n) + a ribonucleoside 5'-diphosphate. Functionally, phosphorolytic 3'-5' exoribonuclease that plays an important role in tRNA 3'-end maturation. Removes nucleotide residues following the 3'-CCA terminus of tRNAs; can also add nucleotides to the ends of RNA molecules by using nucleoside diphosphates as substrates, but this may not be physiologically important. Probably plays a role in initiation of 16S rRNA degradation (leading to ribosome degradation) during starvation. This chain is Ribonuclease PH, found in Haemophilus influenzae (strain PittEE).